The primary structure comprises 259 residues: Protein unc-50 homolog (259 aa).

Residue methionine 1 is modified to N-acetylmethionine. The Cytoplasmic portion of the chain corresponds to 1–82 (MLPSTSLSSS…TKDQWARDDP (82 aa)). A Phosphoserine modification is found at serine 6. The chain crosses the membrane as a helical span at residues 83-103 (AFLVLLSIWLCVSTIGFGFVL). The Lumenal portion of the chain corresponds to 104 to 112 (DMGFFETIK). Residues 113–133 (LLLWVVFIDCVGVGLLISTLM) traverse the membrane as a helical segment. At 134–163 (WFVSNKYLVKRQSRDYDVEWGYAFDVHLNA) the chain is on the cytoplasmic side. Residues 164 to 184 (FYPLLVILHFIQLFFINHVIL) form a helical membrane-spanning segment. Residues 185-187 (TDT) lie on the Lumenal side of the membrane. A helical transmembrane segment spans residues 188-208 (FIGYLVGNTLWLIAVGYYIYV). Residues 209–222 (TFLGYSALPFLKNT) lie on the Cytoplasmic side of the membrane. Residues 223–243 (VILLYPFAPLMVLYGLSLALG) form a helical membrane-spanning segment. The Lumenal segment spans residues 244–259 (WNFTHTLCSFYKYRVK).

The protein belongs to the unc-50 family. As to expression, highly expressed in periodontal ligament and bone marrow, but not in gingival fibroblasts.

It is found in the nucleus inner membrane. The protein resides in the golgi apparatus membrane. Functionally, involved in the cell surface expression of neuronal nicotinic receptors. Binds RNA. In Mus musculus (Mouse), this protein is Protein unc-50 homolog (Unc50).